Here is a 375-residue protein sequence, read N- to C-terminus: Alcohol dehydrogenase 1 (375 aa).

At Ala1 the chain carries N-acetylalanine. Zn(2+) is bound by residues Cys46, His68, Cys98, Cys101, Cys104, Cys112, and Cys175. NAD(+) contacts are provided by residues 200 to 205, Asp224, Lys229, 293 to 295, and Arg370; these read GLGGVG and VGV.

This sequence belongs to the zinc-containing alcohol dehydrogenase family. Class-I subfamily. In terms of assembly, homodimer. Requires Zn(2+) as cofactor.

Its subcellular location is the cytoplasm. The enzyme catalyses a primary alcohol + NAD(+) = an aldehyde + NADH + H(+). It carries out the reaction a secondary alcohol + NAD(+) = a ketone + NADH + H(+). This Columba livia (Rock dove) protein is Alcohol dehydrogenase 1.